A 568-amino-acid polypeptide reads, in one-letter code: NADPH oxidase 3 (568 aa).

The Cytoplasmic portion of the chain corresponds to 1 to 12 (MPTCWILNESVS). The helical transmembrane segment at 13–33 (FVVALLWLAINIYLFIDTFCW) threads the bilayer. Over 34 to 49 (YAEEESFFYTRVILGS) the chain is Extracellular. A helical transmembrane segment spans residues 50 to 70 (ALAWARASAVCLNFNCMLILL). The Ferric oxidoreductase domain maps to 55 to 284 (RASAVCLNFN…VVLYACEIII (230 aa)). Residues 71–103 (PVSRNFVSLVRGTSVCCRGPWRRQLDKNLKFHK) are Cytoplasmic-facing. A helical membrane pass occupies residues 104–124 (LVAYGIAVNSVIHIVAHLFNL). The Extracellular segment spans residues 125–167 (ERYHLGQAKDAEGLLAALSKLGNAPNESYLNPVRTLYTGTTTQ). The chain crosses the membrane as a helical span at residues 168–188 (LLMTVSGITGLVISLALILIM). At 189–201 (TSSTEFIRQSSYE) the chain is on the cytoplasmic side. Residues 202–222 (LFWYTHHIFIFLFISLAIHGG) form a helical membrane-spanning segment. Over 223–395 (GRIIRGQTPE…DGPFGGSLAD (173 aa)) the chain is Extracellular. N-linked (GlcNAc...) asparagine glycosylation is present at Asn238. Residues 285–395 (RFWRSHQEVV…DGPFGGSLAD (111 aa)) form the FAD-binding FR-type domain. The helical transmembrane segment at 396 to 416 (VFHYPVSVCIATGIGVTPFAS) threads the bilayer. The Cytoplasmic segment spans residues 417-568 (LLKSVWYKCC…VHFYYNKENF (152 aa)).

In terms of assembly, forms a heterodimer with CYBA/p22phox which is essential for its activity and cell membrane localization. Heme is required as a cofactor. In terms of processing, N-glycosylated in a CYBA/p22phox-dependent manner. As to expression, expressed in the inner ear by the spiral glanglia and the organ of Corti.

The protein resides in the cell membrane. The catalysed reaction is NADPH + 2 O2 = 2 superoxide + NADP(+) + H(+). Activated by the ototoxic drug cisplatin. Activated by NOXO1. Cooperatively activated by NCF1 and NCF2 or NOXA1 in a phorbol 12-myristate 13-acetate (PMA)-dependent manner. Inhibited by diphenyleneiodonium chloride. In terms of biological role, NADPH oxidase that catalyzes the generation of superoxide from molecular oxygen utilizing NADPH as an electron donor, upon formation of a complex with CYBA/p22phox. Plays a role in the biogenesis of otoconia/otolith, which are crystalline structures of the inner ear involved in the perception of gravity. The sequence is that of NADPH oxidase 3 (Nox3) from Rattus norvegicus (Rat).